We begin with the raw amino-acid sequence, 136 residues long: Histone H3.1t (136 aa).

The interval methionine 1 to arginine 43 is disordered. Arginine 3 is subject to Asymmetric dimethylarginine; by PRMT6; alternate. A Citrulline; alternate modification is found at arginine 3. The residue at position 4 (threonine 4) is a Phosphothreonine; by HASPIN. Lysine 5 is modified (allysine; alternate). Lysine 5 carries the N6,N6,N6-trimethyllysine; alternate modification. An N6,N6-dimethyllysine; alternate modification is found at lysine 5. Position 5 is an N6-(2-hydroxyisobutyryl)lysine; alternate (lysine 5). The residue at position 5 (lysine 5) is an N6-(beta-hydroxybutyryl)lysine; alternate. Residue lysine 5 is modified to N6-acetyllysine; alternate. An N6-methyllysine; alternate modification is found at lysine 5. Position 6 is a 5-glutamyl dopamine; alternate (glutamine 6). A 5-glutamyl serotonin; alternate modification is found at glutamine 6. Threonine 7 carries the post-translational modification Phosphothreonine; by PKC. Arginine 9 carries the post-translational modification Citrulline; alternate. Position 9 is a symmetric dimethylarginine; by PRMT5; alternate (arginine 9). At lysine 10 the chain carries N6,N6,N6-trimethyllysine; alternate. Lysine 10 carries the post-translational modification N6,N6-dimethyllysine; alternate. An N6-(2-hydroxyisobutyryl)lysine; alternate modification is found at lysine 10. Position 10 is an N6-(beta-hydroxybutyryl)lysine; alternate (lysine 10). The residue at position 10 (lysine 10) is an N6-acetyllysine; alternate. Position 10 is an N6-methyllysine; alternate (lysine 10). Position 10 is an N6-lactoyllysine; alternate (lysine 10). Serine 11 carries the post-translational modification ADP-ribosylserine; alternate. The residue at position 11 (serine 11) is a Phosphoserine; alternate; by AURKB, AURKC, RPS6KA3, RPS6KA4 and RPS6KA5. The residue at position 12 (threonine 12) is a Phosphothreonine; by PKC. Lysine 15 carries the post-translational modification N6-(2-hydroxyisobutyryl)lysine; alternate. Residue lysine 15 is modified to N6-(beta-hydroxybutyryl)lysine; alternate. Lysine 15 is subject to N6-acetyllysine; alternate. Residue lysine 15 is modified to N6-lactoyllysine; alternate. Position 15 is an N6-glutaryllysine; alternate (lysine 15). The residue at position 15 (lysine 15) is an N6-succinyllysine; alternate. A Citrulline; alternate modification is found at arginine 18. Arginine 18 bears the Asymmetric dimethylarginine; by CARM1; alternate mark. N6-(2-hydroxyisobutyryl)lysine; alternate occurs at positions 19 and 24. N6-(beta-hydroxybutyryl)lysine; alternate occurs at positions 19 and 24. 2 positions are modified to N6-acetyllysine; alternate: lysine 19 and lysine 24. Residues lysine 19 and lysine 24 each carry the N6-methyllysine; alternate modification. N6-lactoyllysine; alternate is present on residues lysine 19 and lysine 24. Residues lysine 19 and lysine 24 each carry the N6-glutaryllysine; alternate modification. N6-butyryllysine; alternate is present on residues lysine 19 and lysine 24. At arginine 27 the chain carries Citrulline. Lysine 28 is subject to N6,N6,N6-trimethyllysine; alternate. Lysine 28 carries the N6,N6-dimethyllysine; alternate modification. Residue lysine 28 is modified to N6-(2-hydroxyisobutyryl)lysine; alternate. N6-acetyllysine; alternate is present on lysine 28. An N6-methyllysine; alternate modification is found at lysine 28. N6-lactoyllysine; alternate is present on lysine 28. The residue at position 28 (lysine 28) is an N6-glutaryllysine; alternate. The residue at position 29 (serine 29) is an ADP-ribosylserine; alternate. Residue serine 29 is modified to Phosphoserine; alternate; by AURKB, AURKC and RPS6KA5. N6,N6,N6-trimethyllysine; alternate is present on lysine 37. The residue at position 37 (lysine 37) is an N6,N6-dimethyllysine; alternate. Lysine 37 bears the N6-(2-hydroxyisobutyryl)lysine; alternate mark. At lysine 37 the chain carries N6-acetyllysine; alternate. Lysine 37 is subject to N6-methyllysine; alternate. Residue lysine 38 is modified to N6-methyllysine. The residue at position 42 (tyrosine 42) is a Phosphotyrosine. Lysine 57 bears the N6,N6,N6-trimethyllysine; alternate mark. Lysine 57 carries the N6-(2-hydroxyisobutyryl)lysine; alternate modification. Lysine 57 carries the N6-(beta-hydroxybutyryl)lysine; alternate modification. Lysine 57 is modified (N6-acetyllysine; alternate). The residue at position 57 (lysine 57) is an N6-lactoyllysine; alternate. Lysine 57 is subject to N6-glutaryllysine; alternate. Lysine 57 carries the N6-succinyllysine; alternate modification. N6-methyllysine; by EHMT2; alternate is present on lysine 57. Serine 58 carries the phosphoserine modification. 2 positions are modified to N6-(2-hydroxyisobutyryl)lysine; alternate: lysine 65 and lysine 80. N6-methyllysine; alternate is present on residues lysine 65 and lysine 80. Residue lysine 80 is modified to N6,N6,N6-trimethyllysine; alternate. Lysine 80 is subject to N6,N6-dimethyllysine; alternate. Residue lysine 80 is modified to N6-acetyllysine; alternate. At lysine 80 the chain carries N6-lactoyllysine; alternate. Lysine 80 bears the N6-glutaryllysine; alternate mark. An N6-succinyllysine; alternate modification is found at lysine 80. At threonine 81 the chain carries Phosphothreonine. Phosphoserine is present on serine 87. The residue at position 108 (threonine 108) is a Phosphothreonine. 2 positions are modified to N6-acetyllysine; alternate: lysine 116 and lysine 123. An N6-glutaryllysine; alternate mark is found at lysine 116 and lysine 123. An N6-(2-hydroxyisobutyryl)lysine; alternate modification is found at lysine 123. The residue at position 123 (lysine 123) is an N6-methyllysine; alternate. Position 123 is an N6-succinyllysine; alternate (lysine 123).

It belongs to the histone H3 family. In terms of assembly, the nucleosome is a histone octamer containing two molecules each of H2A, H2B, H3 and H4 assembled in one H3-H4 heterotetramer and two H2A-H2B heterodimers. The octamer wraps approximately 147 bp of DNA. Interacts with TONSL; CHAF1A and CHAF1B. Post-translationally, acetylation is generally linked to gene activation. Acetylation on Lys-10 (H3K9ac) impairs methylation at Arg-9 (H3R8me2s). Acetylation on Lys-19 (H3K18ac) and Lys-24 (H3K24ac) favors methylation at Arg-18 (H3R17me). Acetylation at Lys-123 (H3K122ac) by EP300/p300 plays a central role in chromatin structure: localizes at the surface of the histone octamer and stimulates transcription, possibly by promoting nucleosome instability. In terms of processing, citrullination at Arg-9 (H3R8ci) and/or Arg-18 (H3R17ci) by PADI4 impairs methylation and represses transcription. Asymmetric dimethylation at Arg-18 (H3R17me2a) by CARM1 is linked to gene activation. Symmetric dimethylation at Arg-9 (H3R8me2s) by PRMT5 is linked to gene repression. Asymmetric dimethylation at Arg-3 (H3R2me2a) by PRMT6 is linked to gene repression and is mutually exclusive with H3 Lys-5 methylation (H3K4me2 and H3K4me3). H3R2me2a is present at the 3' of genes regardless of their transcription state and is enriched on inactive promoters, while it is absent on active promoters. Post-translationally, methylation at Lys-5 (H3K4me), Lys-37 (H3K36me) and Lys-80 (H3K79me) are linked to gene activation. Methylation at Lys-5 (H3K4me) facilitates subsequent acetylation of H3 and H4. Methylation at Lys-80 (H3K79me) is associated with DNA double-strand break (DSB) responses and is a specific target for TP53BP1. Methylation at Lys-10 (H3K9me) and Lys-28 (H3K27me) are linked to gene repression. Methylation at Lys-10 (H3K9me) is a specific target for HP1 proteins (CBX1, CBX3 and CBX5) and prevents subsequent phosphorylation at Ser-11 (H3S10ph) and acetylation of H3 and H4. Methylation at Lys-5 (H3K4me) and Lys-80 (H3K79me) require preliminary monoubiquitination of H2B at 'Lys-120'. Methylation at Lys-10 (H3K9me) and Lys-28 (H3K27me) are enriched in inactive X chromosome chromatin. Monomethylation at Lys-57 (H3K56me1) by EHMT2/G9A in G1 phase promotes interaction with PCNA and is required for DNA replication. In terms of processing, phosphorylated at Thr-4 (H3T3ph) by HASPIN during prophase and dephosphorylated during anaphase. Phosphorylation at Ser-11 (H3S10ph) by AURKB is crucial for chromosome condensation and cell-cycle progression during mitosis and meiosis. In addition phosphorylation at Ser-11 (H3S10ph) by RPS6KA4 and RPS6KA5 is important during interphase because it enables the transcription of genes following external stimulation, like mitogens, stress, growth factors or UV irradiation and result in the activation of genes, such as c-fos and c-jun. Phosphorylation at Ser-11 (H3S10ph), which is linked to gene activation, prevents methylation at Lys-10 (H3K9me) but facilitates acetylation of H3 and H4. Phosphorylation at Ser-11 (H3S10ph) by AURKB mediates the dissociation of HP1 proteins (CBX1, CBX3 and CBX5) from heterochromatin. Phosphorylation at Ser-11 (H3S10ph) is also an essential regulatory mechanism for neoplastic cell transformation. Phosphorylated at Ser-29 (H3S28ph) by MAP3K20 isoform 1, RPS6KA5 or AURKB during mitosis or upon ultraviolet B irradiation. Phosphorylation at Thr-7 (H3T6ph) by PRKCB is a specific tag for epigenetic transcriptional activation that prevents demethylation of Lys-5 (H3K4me) by LSD1/KDM1A. At centromeres, specifically phosphorylated at Thr-12 (H3T11ph) from prophase to early anaphase, by DAPK3 and PKN1. Phosphorylation at Thr-12 (H3T11ph) by PKN1 or isoform M2 of PKM (PKM2) is a specific tag for epigenetic transcriptional activation that promotes demethylation of Lys-10 (H3K9me) by KDM4C/JMJD2C. Phosphorylation at Tyr-42 (H3Y41ph) by JAK2 promotes exclusion of CBX5 (HP1 alpha) from chromatin. Ubiquitinated. Post-translationally, lysine deamination at Lys-5 (H3K4all) to form allysine is mediated by LOXL2. Allysine formation by LOXL2 only takes place on H3K4me3 and results in gene repression. In terms of processing, butyrylation of histones marks active promoters and competes with histone acetylation. It is present during late spermatogenesis. Succinylation at Lys-80 (H3K79succ) by KAT2A takes place with a maximum frequency around the transcription start sites of genes. It gives a specific tag for epigenetic transcription activation. Desuccinylation at Lys-123 (H3K122succ) by SIRT7 in response to DNA damage promotes chromatin condensation and double-strand breaks (DSBs) repair. Post-translationally, serine ADP-ribosylation constitutes the primary form of ADP-ribosylation of proteins in response to DNA damage. Serine ADP-ribosylation at Ser-11 (H3S10ADPr) is mutually exclusive with phosphorylation at Ser-11 (H3S10ph) and impairs acetylation at Lys-10 (H3K9ac). Expressed in testicular cells.

It localises to the nucleus. The protein localises to the chromosome. Core component of nucleosome. Nucleosomes wrap and compact DNA into chromatin, limiting DNA accessibility to the cellular machineries which require DNA as a template. Histones thereby play a central role in transcription regulation, DNA repair, DNA replication and chromosomal stability. DNA accessibility is regulated via a complex set of post-translational modifications of histones, also called histone code, and nucleosome remodeling. In Homo sapiens (Human), this protein is Histone H3.1t.